A 96-amino-acid polypeptide reads, in one-letter code: Glutamyl-tRNA(Gln) amidotransferase subunit C (96 aa).

Belongs to the GatC family. As to quaternary structure, heterotrimer of A, B and C subunits.

It carries out the reaction L-glutamyl-tRNA(Gln) + L-glutamine + ATP + H2O = L-glutaminyl-tRNA(Gln) + L-glutamate + ADP + phosphate + H(+). The catalysed reaction is L-aspartyl-tRNA(Asn) + L-glutamine + ATP + H2O = L-asparaginyl-tRNA(Asn) + L-glutamate + ADP + phosphate + 2 H(+). Allows the formation of correctly charged Asn-tRNA(Asn) or Gln-tRNA(Gln) through the transamidation of misacylated Asp-tRNA(Asn) or Glu-tRNA(Gln) in organisms which lack either or both of asparaginyl-tRNA or glutaminyl-tRNA synthetases. The reaction takes place in the presence of glutamine and ATP through an activated phospho-Asp-tRNA(Asn) or phospho-Glu-tRNA(Gln). The protein is Glutamyl-tRNA(Gln) amidotransferase subunit C of Neisseria meningitidis serogroup B (strain ATCC BAA-335 / MC58).